The chain runs to 79 residues: Putative membrane protein insertion efficiency factor (79 aa).

It belongs to the UPF0161 family.

It is found in the cell inner membrane. Could be involved in insertion of integral membrane proteins into the membrane. This is Putative membrane protein insertion efficiency factor from Prochlorococcus marinus (strain NATL2A).